Here is a 507-residue protein sequence, read N- to C-terminus: Dihydrolipoyl dehydrogenase 1, mitochondrial (507 aa).

The transit peptide at 1-36 directs the protein to the mitochondrion; sequence MAMASLARRKAYFLTRNLSNSPTDALRFSFSLSRGF. FAD contacts are provided by residues 73–82, K91, G155, and 184–186; these read EKRGALGGTC and TGS. Cysteines 82 and 87 form a disulfide. NAD(+) contacts are provided by residues 221–228, E244, V278, and G313; that span reads GAGYIGLE. FAD contacts are provided by residues D354 and 360 to 363; that span reads MLAH. H486 serves as the catalytic Proton acceptor.

The protein belongs to the class-I pyridine nucleotide-disulfide oxidoreductase family. Homodimer. Part of both the glycine cleavage system composed of four proteins: P, T, L and H and of the pyruvate dehydrogenase complex containing multiple copies of three enzymatic components: pyruvate dehydrogenase (E1), dihydrolipoamide acetyltransferase (E2) and lipoamide dehydrogenase (E3). The cofactor is FAD. In terms of processing, S-nytrosylated at unknown positions. Preferentially expressed in leaves, flowers and siliques and at a lower level in roots and stems.

It is found in the mitochondrion matrix. It carries out the reaction N(6)-[(R)-dihydrolipoyl]-L-lysyl-[protein] + NAD(+) = N(6)-[(R)-lipoyl]-L-lysyl-[protein] + NADH + H(+). Its function is as follows. Lipoamide dehydrogenase is a component of the glycine decarboxylase (GDC) or glycine cleavage system as well as of the alpha-ketoacid dehydrogenase complexes. LPD1 is probably the protein most often associated with the glycine decarboxylase complex while LPD2 is probably incorporated into alpha-ketoacid dehydrogenase complexes. This Arabidopsis thaliana (Mouse-ear cress) protein is Dihydrolipoyl dehydrogenase 1, mitochondrial (LPD1).